Reading from the N-terminus, the 314-residue chain is Olfactory receptor 52H1 (314 aa).

At 1–32 (MIIFNLSSYNPGPFILVGIPGLEQFHVWIGIP) the chain is on the extracellular side. Asn5 carries an N-linked (GlcNAc...) asparagine glycan. The helical transmembrane segment at 33–53 (FCIIYIVAVVGNCILLYLIVV) threads the bilayer. Over 54–59 (EHSLHE) the chain is Cytoplasmic. Residues 60–80 (PMFFFLSMLAMTDLILSTAGV) traverse the membrane as a helical segment. The Extracellular portion of the chain corresponds to 81–101 (PKALSIFWLGAREITFPGCLT). A disulfide bond links Cys99 and Cys181. A helical membrane pass occupies residues 102 to 122 (QMFFLHYNFVLDSAILMAMAF). Over 123–149 (DHYVAICSPLRYTTILTPKTIIKSAMG) the chain is Cytoplasmic. The helical transmembrane segment at 150–170 (ISFRSFCIILPDVFLLTCLPF) threads the bilayer. Residues 171 to 197 (CRTRIIPHTYCEHIGVAQLACADISIN) are Extracellular-facing. A helical transmembrane segment spans residues 198–218 (FWYGFCVPIMTVISDVILIAV). The Cytoplasmic portion of the chain corresponds to 219–242 (SYAHILCAVFGLPSQDACQKALGT). A helical membrane pass occupies residues 243 to 263 (CGSHVCVILMFYTPAFFSILA). The Extracellular segment spans residues 264–275 (HRFGHNVSRTFH). Residue Asn269 is glycosylated (N-linked (GlcNAc...) asparagine). A helical membrane pass occupies residues 276 to 296 (IMFANLYIVIPPALNPMVYGV). Residues 297–314 (KTKQIRDKVILLFSKGTG) lie on the Cytoplasmic side of the membrane.

This sequence belongs to the G-protein coupled receptor 1 family.

Its subcellular location is the membrane. Its function is as follows. Odorant receptor. This chain is Olfactory receptor 52H1 (OR52H1), found in Homo sapiens (Human).